Consider the following 144-residue polypeptide: Large ribosomal subunit protein uL15 (144 aa).

Positions 1-53 are disordered; that stretch reads MRLNTLSPAEGAKHAPKRVGRGIGSGLGKTGGRGHKGQKSRSGGGVRRGFEGG. Residues 21–31 show a composition bias toward gly residues; that stretch reads RGIGSGLGKTG.

This sequence belongs to the universal ribosomal protein uL15 family. In terms of assembly, part of the 50S ribosomal subunit.

Its function is as follows. Binds to the 23S rRNA. The sequence is that of Large ribosomal subunit protein uL15 from Proteus mirabilis (strain HI4320).